An 880-amino-acid chain; its full sequence is Valine--tRNA ligase (880 aa).

A 'HIGH' region motif is present at residues 46–56; it reads PNVTGKLHLGH. Positions 520–524 match the 'KMSKS' region motif; sequence KMSKS. Lys523 is an ATP binding site. Residues 808–880 are a coiled coil; it reads LAGLINIEEE…KARIAELKEN (73 aa).

This sequence belongs to the class-I aminoacyl-tRNA synthetase family. ValS type 1 subfamily. As to quaternary structure, monomer.

It is found in the cytoplasm. It catalyses the reaction tRNA(Val) + L-valine + ATP = L-valyl-tRNA(Val) + AMP + diphosphate. Its function is as follows. Catalyzes the attachment of valine to tRNA(Val). As ValRS can inadvertently accommodate and process structurally similar amino acids such as threonine, to avoid such errors, it has a 'posttransfer' editing activity that hydrolyzes mischarged Thr-tRNA(Val) in a tRNA-dependent manner. The chain is Valine--tRNA ligase from Lactococcus lactis subsp. lactis (strain IL1403) (Streptococcus lactis).